Consider the following 394-residue polypeptide: L-lactate dehydrogenase (394 aa).

The region spanning 1–380 (MIISAASDYR…SRDSLVQNAE (380 aa)) is the FMN hydroxy acid dehydrogenase domain. Y24 provides a ligand contact to substrate. FMN is bound by residues S106 and Q127. Substrate is bound at residue Y129. Position 155 (T155) interacts with FMN. R164 lines the substrate pocket. Position 251 (K251) interacts with FMN. H275 (proton acceptor) is an active-site residue. R278 contributes to the substrate binding site. 306-330 (DSGIRNGLDVVRMIALGADSVLLGR) is a binding site for FMN.

Belongs to the FMN-dependent alpha-hydroxy acid dehydrogenase family. The cofactor is FMN.

Its subcellular location is the cell inner membrane. It carries out the reaction (S)-lactate + A = pyruvate + AH2. Functionally, catalyzes the conversion of L-lactate to pyruvate. Is coupled to the respiratory chain. The protein is L-lactate dehydrogenase of Klebsiella pneumoniae (strain 342).